The sequence spans 325 residues: Elongation factor P--(R)-beta-lysine ligase (325 aa).

76–78 provides a ligand contact to substrate; it reads SPE. Residues 100–102 and Asn-109 contribute to the ATP site; that span reads RNE. Tyr-118 lines the substrate pocket. Position 244–245 (244–245) interacts with ATP; sequence EL. Residue Glu-251 coordinates substrate. Gly-300 is an ATP binding site.

It belongs to the class-II aminoacyl-tRNA synthetase family. EpmA subfamily. As to quaternary structure, homodimer.

It catalyses the reaction D-beta-lysine + L-lysyl-[protein] + ATP = N(6)-((3R)-3,6-diaminohexanoyl)-L-lysyl-[protein] + AMP + diphosphate + H(+). Functionally, with EpmB is involved in the beta-lysylation step of the post-translational modification of translation elongation factor P (EF-P) on 'Lys-34'. Catalyzes the ATP-dependent activation of (R)-beta-lysine produced by EpmB, forming a lysyl-adenylate, from which the beta-lysyl moiety is then transferred to the epsilon-amino group of EF-P 'Lys-34'. The chain is Elongation factor P--(R)-beta-lysine ligase from Salmonella arizonae (strain ATCC BAA-731 / CDC346-86 / RSK2980).